The following is a 152-amino-acid chain: Large ribosomal subunit protein uL15 (152 aa).

Residues 1–56 (MELNTLKPAKNSVKQNTRYGRGQGSGKGGTSTRGHKGAKSRSGYKSKPGFEGGQLP) form a disordered region. Residues 21-31 (RGQGSGKGGTS) show a composition bias toward gly residues. Over residues 33-44 (RGHKGAKSRSGY) the composition is skewed to basic residues.

Belongs to the universal ribosomal protein uL15 family. In terms of assembly, part of the 50S ribosomal subunit.

In terms of biological role, binds to the 23S rRNA. The protein is Large ribosomal subunit protein uL15 of Amoebophilus asiaticus (strain 5a2).